The chain runs to 115 residues: UPF0295 protein BPUM_0828 (115 aa).

Helical transmembrane passes span 13-33 (TFAL…VFFK) and 41-61 (FFML…FWIG).

It belongs to the UPF0295 family.

The protein localises to the cell membrane. In Bacillus pumilus (strain SAFR-032), this protein is UPF0295 protein BPUM_0828.